Consider the following 369-residue polypeptide: MSGYQPPVVIDNGSGMIKAGLAGTREPQFVYPNILGRSKGHTADSRQELCVGDQAQERRSFLSISYPVERGLISSWGDMEIMWKHIYDYNLNLNASDGPVLVTEPALNPLADRQHISEVFFENLGVPAFYMSAQAVLALFAAGFTTGLVLNSGAGITQCVPIFEGYCLSHGVKQLNVAGSDLTSYLMMLLKGDGIMLLRTGDRKVVTDIKENACYVAMNYEDEMTKDSNLEKIYTLPDGKTVKLHKQLFHCPEALFSPYLVNVDAPGIDKMCFGSIMKCDTDLRNSFFSNIILSGGSTSFPGLDKRLIKDVAKLAPANTAVQVIAPPERKISVWMGGSILASLSAFQDMWITAAEFEEVGPNIVHQRCF.

It belongs to the actin family. Interacts with PFN3. As to expression, testis specific (at protein level). Expressed specifically in haploid germ cells.

The protein localises to the cytoplasm. The protein resides in the cytoskeleton. It is found in the nucleus. In Mus musculus (Mouse), this protein is Actin-related protein T3 (Actrt3).